The primary structure comprises 341 residues: Adenylosuccinate synthetase (341 aa).

Residues 12 to 18 (GDEGKGK) and 42 to 44 (GHS) each bind GTP. Aspartate 13 acts as the Proton acceptor in catalysis. Residues aspartate 13 and glycine 42 each coordinate Mg(2+). Residues 13 to 16 (DEGK), 40 to 43 (NAGH), threonine 127, arginine 141, glutamine 179, threonine 194, and arginine 256 contribute to the IMP site. Histidine 43 functions as the Proton donor in the catalytic mechanism. 252 to 258 (VVTGRKR) is a substrate binding site. GTP-binding positions include arginine 258, 284–286 (CID), and 324–326 (STG).

This sequence belongs to the adenylosuccinate synthetase family. As to quaternary structure, homodimer. Mg(2+) is required as a cofactor.

The protein localises to the cytoplasm. It catalyses the reaction IMP + L-aspartate + GTP = N(6)-(1,2-dicarboxyethyl)-AMP + GDP + phosphate + 2 H(+). Its pathway is purine metabolism; AMP biosynthesis via de novo pathway; AMP from IMP: step 1/2. Its function is as follows. Plays an important role in the de novo pathway of purine nucleotide biosynthesis. Catalyzes the first committed step in the biosynthesis of AMP from IMP. The protein is Adenylosuccinate synthetase of Methanosphaera stadtmanae (strain ATCC 43021 / DSM 3091 / JCM 11832 / MCB-3).